The primary structure comprises 46 residues: uncharacterized protein (46 aa).

The protein localises to the plastid. It is found in the chloroplast. This is an uncharacterized protein from Trieres chinensis (Marine centric diatom).